The following is a 622-amino-acid chain: UvrABC system protein C (622 aa).

Residues 13–92 (DKPGVYLMKN…IKKYRPRYNI (80 aa)) enclose the GIY-YIG domain. The region spanning 204–239 (KDIIRKLKEDMDTLSENMEFEKAAELRDKIFALEKI) is the UVR domain.

It belongs to the UvrC family. As to quaternary structure, interacts with UvrB in an incision complex.

The protein localises to the cytoplasm. Functionally, the UvrABC repair system catalyzes the recognition and processing of DNA lesions. UvrC both incises the 5' and 3' sides of the lesion. The N-terminal half is responsible for the 3' incision and the C-terminal half is responsible for the 5' incision. The polypeptide is UvrABC system protein C (Clostridium kluyveri (strain ATCC 8527 / DSM 555 / NBRC 12016 / NCIMB 10680 / K1)).